The primary structure comprises 299 residues: Regucalcin (299 aa).

Glutamate 18 provides a ligand contact to a divalent metal cation. Substrate is bound by residues arginine 101, asparagine 103, and glutamate 121. A divalent metal cation-binding residues include asparagine 154 and aspartate 204. Aspartate 204 acts as the Proton donor/acceptor in catalysis.

It belongs to the SMP-30/CGR1 family. Zn(2+) serves as cofactor. It depends on Mn(2+) as a cofactor. Ca(2+) is required as a cofactor. The cofactor is Mg(2+). In terms of tissue distribution, expressed in the liver, and in the pronephros from the late tadpole stage.

It localises to the cytoplasm. The catalysed reaction is D-glucono-1,5-lactone + H2O = D-gluconate + H(+). It functions in the pathway cofactor biosynthesis; L-ascorbate biosynthesis via UDP-alpha-D-glucuronate pathway; L-ascorbate from UDP-alpha-D-glucuronate: step 3/4. Its function is as follows. Gluconolactonase with low activity towards other sugar lactones, including gulonolactone and galactonolactone. Catalyzes a key step in ascorbic acid (vitamin C) biosynthesis. Can also hydrolyze diisopropyl phosphorofluoridate and phenylacetate (in vitro). Calcium-binding protein. Modulates Ca(2+) signaling, and Ca(2+)-dependent cellular processes and enzyme activities. This chain is Regucalcin, found in Xenopus laevis (African clawed frog).